An 81-amino-acid chain; its full sequence is Neuronatin (81 aa).

It belongs to the neuronatin family.

In terms of biological role, may participate in the maintenance of segment identity in the hindbrain and pituitary development, and maturation or maintenance of the overall structure of the nervous system. May function as a regulatory subunit of ion channels. The sequence is that of Neuronatin (NNAT) from Sus scrofa (Pig).